Consider the following 498-residue polypeptide: ATP synthase subunit beta, chloroplastic (498 aa).

172-179 (GGAGVGKT) contributes to the ATP binding site.

This sequence belongs to the ATPase alpha/beta chains family. F-type ATPases have 2 components, CF(1) - the catalytic core - and CF(0) - the membrane proton channel. CF(1) has five subunits: alpha(3), beta(3), gamma(1), delta(1), epsilon(1). CF(0) has four main subunits: a(1), b(1), b'(1) and c(9-12).

The protein resides in the plastid. It localises to the chloroplast thylakoid membrane. The catalysed reaction is ATP + H2O + 4 H(+)(in) = ADP + phosphate + 5 H(+)(out). Its function is as follows. Produces ATP from ADP in the presence of a proton gradient across the membrane. The catalytic sites are hosted primarily by the beta subunits. In Gossypium hirsutum (Upland cotton), this protein is ATP synthase subunit beta, chloroplastic.